The sequence spans 361 residues: MKQKMMARLLRTSFALLFLGLFGVLGAATISCRNEEGKAVDWFTFYKLPKRQNKESGETGLEYLYLDSTTRSWRKSEQLMNDTKSVLGRTLQQLYEAYASKSNNTAYLIYNDGVPKPVNYSRKYGHTKGLLLWNRVQGFWLIHSIPQFPPIPEEGYDYPPTGRRNGQSGICITFKYNQYEAIDSQLLVCNPNVYSCSIPATFHQELIHMPQLCTRASSSEIPGRLLTTLQSAQGQKFLHFAKSDSFLDDIFAAWMAQRLKTHLLTETWQRKRQELPSNCSLPYHVYNIKAIKLSRHSYFSSYQDHAKWCISQKGTKNRWTCIGDLNRSPHQAFRSGGFICTQNWQIYQAFQGLVLYYESCK.

The signal sequence occupies residues 1 to 27 (MKQKMMARLLRTSFALLFLGLFGVLGA). Residues N81, N103, N119, and N278 are each glycosylated (N-linked (GlcNAc...) asparagine).

Belongs to the DNase II family. In terms of tissue distribution, highly expressed in the eye lens and in salivary gland. Detected at lower levels in lung, prostate and lymph node. Isoform 2 is lung specific.

It is found in the lysosome. It carries out the reaction Endonucleolytic cleavage to nucleoside 3'-phosphates and 3'-phosphooligonucleotide end-products.. Its function is as follows. Hydrolyzes DNA under acidic conditions. Does not require divalent cations for activity. Participates in the degradation of nuclear DNA during lens cell differentiation. The sequence is that of Deoxyribonuclease-2-beta (DNASE2B) from Homo sapiens (Human).